A 1297-amino-acid chain; its full sequence is Phosphoribosylformylglycinamidine synthase (1297 aa).

Positions 304–323 (PFPGAATGSGGEIRDEGATG) are disordered. ATP is bound by residues 307–318 (GAATGSGGEIRD) and A678. Mg(2+) is bound by residues D679, E718, N722, and D886. S888 contacts ATP. A Glutamine amidotransferase type-1 domain is found at 1043 to 1297 (RIAILREQGV…LFQNARVALG (255 aa)). C1137 acts as the Nucleophile in catalysis. Active-site residues include H1262 and E1264.

It in the N-terminal section; belongs to the FGAMS family. Monomer.

It is found in the cytoplasm. The catalysed reaction is N(2)-formyl-N(1)-(5-phospho-beta-D-ribosyl)glycinamide + L-glutamine + ATP + H2O = 2-formamido-N(1)-(5-O-phospho-beta-D-ribosyl)acetamidine + L-glutamate + ADP + phosphate + H(+). Its pathway is purine metabolism; IMP biosynthesis via de novo pathway; 5-amino-1-(5-phospho-D-ribosyl)imidazole from N(2)-formyl-N(1)-(5-phospho-D-ribosyl)glycinamide: step 1/2. In terms of biological role, phosphoribosylformylglycinamidine synthase involved in the purines biosynthetic pathway. Catalyzes the ATP-dependent conversion of formylglycinamide ribonucleotide (FGAR) and glutamine to yield formylglycinamidine ribonucleotide (FGAM) and glutamate. This Histophilus somni (strain 129Pt) (Haemophilus somnus) protein is Phosphoribosylformylglycinamidine synthase.